Here is a 235-residue protein sequence, read N- to C-terminus: Small ribosomal subunit protein uS3 (235 aa).

Residues 39–107 (IREILHKELK…DVVINIVEIR (69 aa)) form the KH type-2 domain. Residues 215–235 (QDKRMAESDGGGSSRPRRDAA) form a disordered region.

It belongs to the universal ribosomal protein uS3 family. Part of the 30S ribosomal subunit. Forms a tight complex with proteins S10 and S14.

Functionally, binds the lower part of the 30S subunit head. Binds mRNA in the 70S ribosome, positioning it for translation. This chain is Small ribosomal subunit protein uS3, found in Rhodopseudomonas palustris (strain TIE-1).